The chain runs to 62 residues: Amolopin-P2 (62 aa).

Residues 1 to 22 form the signal peptide; sequence MFTLKKSLLLLFFLGTISLSLC. Residues 23 to 44 constitute a propeptide that is removed on maturation; sequence EQERGADEEENGGEVTEQEVKR.

This sequence belongs to the frog skin active peptide (FSAP) family. Amolopin subfamily. As to expression, expressed by the skin glands.

It localises to the secreted. Functionally, antimicrobial peptide with activity against Gram-positive bacteria. Has been tested against S.aureus (MIC=37.5 ug/mL), against B.pumilus (MIC=75.0 ug/mL), B.cereus (no activity detected). Does not show activity against Gram-negative bacteria (E.coli, B.dysenteriae, A.calcoaceticus, P.aeruginosa) and fungi (C.albicans). Does not show hemolytic activity against rabbit erythrocytes. In Amolops loloensis (Lolokou Sucker Frog), this protein is Amolopin-P2.